The following is a 1872-amino-acid chain: Chitin synthase 6 (1872 aa).

The segment at 1–23 (MAQHLPPVGGNGGAHTQPSLPAL) is disordered. Positions 1–779 (MAQHLPPVGG…CWMEIAQLSD (779 aa)) constitute a Myosin motor domain. 104–111 (GESGSGKT) is an ATP binding site. Asparagine 123, asparagine 291, asparagine 428, and asparagine 559 each carry an N-linked (GlcNAc...) asparagine glycan. Residues 587–652 (VMQASVSSKP…VNKPSEEGAS (66 aa)) are disordered. The interval 659–683 (LDNVTKSFHAQNTNAYFVFCLKPND) is actin-binding. Residue asparagine 661 is glycosylated (N-linked (GlcNAc...) asparagine). Transmembrane regions (helical) follow at residues 881 to 901 (WVFITWMLTFFVPEFLIQHLG) and 920 to 940 (FIIWFSCLAAAFILVVFPMLV). One can recognise a Cytochrome b5 heme-binding domain in the interval 944-1003 (QYVFTGEELSAYNGKDGKASYAAIRGQVFDIGSFIPRHPLPYLPSKLFTQYAGTDITGLF). Residues asparagine 1030, asparagine 1055, and asparagine 1120 are each glycosylated (N-linked (GlcNAc...) asparagine). Residues 1193-1213 (FILAVTIILCSIIAFKFLAAL) form a helical membrane-spanning segment. 2 N-linked (GlcNAc...) asparagine glycosylation sites follow: asparagine 1450 and asparagine 1556. The next 3 helical transmembrane spans lie at 1581–1601 (FIVFIDLLSTIIQPVTIAYIV), 1614–1634 (VPVLAFVLLAAVYGLQAIIFI), and 1641–1661 (MIAWMILYIIAMPIFSFGLPL). The DEK-C domain maps to 1814–1869 (LPSDDALLAEIREILRTADLMTVTKKGVKQELERRFGVNLDSRRAYINSATEALLS).

Belongs to the chitin synthase family. Class V subfamily.

Its subcellular location is the cell membrane. It catalyses the reaction [(1-&gt;4)-N-acetyl-beta-D-glucosaminyl](n) + UDP-N-acetyl-alpha-D-glucosamine = [(1-&gt;4)-N-acetyl-beta-D-glucosaminyl](n+1) + UDP + H(+). Polymerizes chitin, a structural polymer of the cell wall and septum, by transferring the sugar moiety of UDP-GlcNAc to the non-reducing end of the growing chitin polymer. Required for appressorium penetration and invasive growth. This Pyricularia oryzae (strain 70-15 / ATCC MYA-4617 / FGSC 8958) (Rice blast fungus) protein is Chitin synthase 6.